We begin with the raw amino-acid sequence, 548 residues long: Frizzled-7-B (548 aa).

The signal sequence occupies residues 1-18 (MLAPVSLLFCLFLQLCPS). Topologically, residues 19-230 (AQQYHGEKGI…EEEVRFARLW (212 aa)) are extracellular. Positions 31–150 (PDHGFCQPIS…HGAGEICVGQ (120 aa)) constitute an FZ domain. Intrachain disulfides connect C36-C97, C44-C90, C81-C118, C107-C147, and C111-C135. N50 carries N-linked (GlcNAc...) asparagine glycosylation. N151 is a glycosylation site (N-linked (GlcNAc...) asparagine). A helical transmembrane segment spans residues 231–251 (VGIWAILCGISTLFTVLTYLV). Over 252–262 (DMRRFSYPERP) the chain is Cytoplasmic. A helical membrane pass occupies residues 263–283 (IIFLSGCYFMVAVAYTAGFLL). Residues 284-311 (EERAVCVERFSEDSYRTVAQGTKKEGCT) are Extracellular-facing. The helical transmembrane segment at 312–332 (ILFMILYFFGMASSIWWVILA) threads the bilayer. The Cytoplasmic segment spans residues 333–353 (LTWFLSAGMKWGHEAIEANSQ). Residues 354-374 (YFHLAAWAVPAVKTITILAMG) form a helical membrane-spanning segment. Over 375 to 397 (QVDGDVLSGVCYVGINSVDSLRG) the chain is Extracellular. A helical transmembrane segment spans residues 398-418 (FVLAPLFVYLFLGTSFLLAGF). Over 419–444 (VSLFRIRTIMKHDGTKTEKLEKLMVR) the chain is Cytoplasmic. A helical membrane pass occupies residues 445-465 (IGVFSVMYTVPATIVLACYFY). The Extracellular segment spans residues 466-502 (EQAFRDTWEKTWLVHTCKGYAVPCPNYNFAPMSPDFT). Residues 503-523 (VFMIKYLMTMIVGITSSFWIW) traverse the membrane as a helical segment. Over 524–548 (SGKTLQSWRRFYHRLGNGSKGETAV) the chain is Cytoplasmic. Positions 526 to 531 (KTLQSW) match the Lys-Thr-X-X-X-Trp motif, mediates interaction with the PDZ domain of Dvl family members motif. The PDZ-binding signature appears at 546–548 (TAV).

This sequence belongs to the G-protein coupled receptor Fz/Smo family. In terms of assembly, interacts with wnt11 and sdc4. The extracellular domain interacts with the extracellular domain of pcdh8/papc. Interacts (via C-terminus) with dvl1 (via PDZ domain). As to expression, during gastrulation, broadly expressed on the dorsal side of the embryo in deep mesodermal cells surrounding the blastopore lip and in presumptive anterior neuroectoderm. During neurulation, localized to the cranial neural crest and heart field where expression is retained at later stages in addition to new areas of expression in the neural tube, pronephros and tailbud. At tailbud stage, expressed in the pronephric duct, and broad head expression becomes more restricted to the hindbrain. In tadpoles, strongly expressed in the eye and the pericardium and myocardium of the developing heart.

The protein resides in the cell membrane. The protein localises to the endosome membrane. Its function is as follows. Receptor for Wnt proteins. Acts in both canonical and non-canonical Wnt pathways. Although different papers report differing Wnt preferences, wnt5a, wnt8b and wnt11 have been proposed as synergists. In the canonical Wnt pathway, acts via beta-catenin to promote the expression of the dorsal genes siamois, twin and nodal3 and to establish the dorsal axis of the embryo and induce dorsal mesoderm formation. In a non-canonical Wnt/planar cell polarity (PCP) pathway, acts with sdc4 and dvl2/dsh to regulate convergent extension cell movements during gastrulation. Triggers phosphorylation of dvl2/dsh and its translocation to the plasma membrane. In a third branch of Wnt signaling, acts in a non-canonical pathway via trimeric G proteins, and independently of dvl2/dsh, to recruit protein kinase C (PKC) to the membrane and thus activate PKC. PKC signaling controls cell sorting and tissue separation during gastrulation. The protein is Frizzled-7-B (fzd7-b) of Xenopus laevis (African clawed frog).